The following is a 101-amino-acid chain: Apolipoprotein C-II (101 aa).

The N-terminal stretch at 1–22 (MGIRYLLVLVLVLLVLGCEVQG) is a signal peptide. The interval 66-74 (TMDEKIREI) is lipid binding. The lipoprotein lipase cofactor stretch occupies residues 78-101 (STAAVSTYAGIFTDQLLSMLKGDQ).

Belongs to the apolipoprotein C2 family. Proapolipoprotein C-II is synthesized as a sialic acid containing glycoprotein which is subsequently desialylated prior to its proteolytic processing. In terms of processing, proapolipoprotein C-II, the major form found in plasma undergoes proteolytic cleavage of its N-terminal hexapeptide to generate apolipoprotein C-II, which occurs as the minor form in plasma.

It localises to the secreted. Its function is as follows. Component of chylomicrons, very low-density lipoproteins (VLDL), low-density lipoproteins (LDL), and high-density lipoproteins (HDL) in plasma. Plays an important role in lipoprotein metabolism as an activator of lipoprotein lipase. Both proapolipoprotein C-II and apolipoprotein C-II can activate lipoprotein lipase. This chain is Apolipoprotein C-II (APOC2), found in Phoca vitulina (Harbor seal).